Reading from the N-terminus, the 361-residue chain is Plasmid recombination enzyme (361 aa).

Tyr44 and Tyr114 together coordinate DNA. Residues 331–361 (RAGLKEPSKKAPESSQELDRHKSDELGGPHL) form a disordered region.

The protein belongs to the plasmid mobilization pre family.

The interaction of the RSA site and the pre protein may not only serve a function in plasmid maintenance, but also contribute to the distribution of small antibiotic resistance plasmids among Gram-positive bacteria. In Lactiplantibacillus plantarum (Lactobacillus plantarum), this protein is Plasmid recombination enzyme (preA).